Reading from the N-terminus, the 353-residue chain is Paraxanthine methyltransferase 2 (353 aa).

Tyr18 is an S-adenosyl-L-methionine binding site. Substrate is bound by residues Tyr18 and 21–25 (QSSYQ). S-adenosyl-L-methionine-binding positions include Gly59, 59–60 (GC), Asn65, 99–102 (FNDL), 128–130 (SFF), and 145–147 (SYA). Position 146-150 (146-150 (YAFLF)) interacts with substrate. 3 residues coordinate Mg(2+): Asn167, Asp252, and Phe254. Ser301 and Tyr306 together coordinate substrate.

Belongs to the methyltransferase superfamily. SABATH family. In terms of assembly, homodimer. Mg(2+) serves as cofactor.

This is Paraxanthine methyltransferase 2 from Arabidopsis thaliana (Mouse-ear cress).